The chain runs to 745 residues: Polyribonucleotide nucleotidyltransferase (745 aa).

2 residues coordinate Mg(2+): Asp-487 and Asp-493. The KH domain occupies 554-613; the sequence is PRIETMQIPTDKIRDVIGTGGKIIREIVEKTGAKINIEDTGIVKIASSDGKAIKAAYNWI. Residues 623-691 form the S1 motif domain; sequence GTIYDGTIVK…ERGKIRLSMK (69 aa). Residues 695–745 are disordered; it reads QETGEDLTEKLKAERAERGEPEREERSDRGDRGDRGPRRDRGERRRESSGE. Basic and acidic residues predominate over residues 701–745; sequence LTEKLKAERAERGEPEREERSDRGDRGDRGPRRDRGERRRESSGE.

It belongs to the polyribonucleotide nucleotidyltransferase family. Mg(2+) is required as a cofactor.

It is found in the cytoplasm. The enzyme catalyses RNA(n+1) + phosphate = RNA(n) + a ribonucleoside 5'-diphosphate. Functionally, involved in mRNA degradation. Catalyzes the phosphorolysis of single-stranded polyribonucleotides processively in the 3'- to 5'-direction. This is Polyribonucleotide nucleotidyltransferase from Methylorubrum extorquens (strain CM4 / NCIMB 13688) (Methylobacterium extorquens).